The chain runs to 507 residues: ATP synthase subunit alpha, plastid (507 aa).

170-177 (GDRQTGKT) is an ATP binding site.

It belongs to the ATPase alpha/beta chains family. F-type ATPases have 2 components, CF(1) - the catalytic core - and CF(0) - the membrane proton channel. CF(1) has five subunits: alpha(3), beta(3), gamma(1), delta(1), epsilon(1). CF(0) has four main subunits: a, b, b' and c.

Its subcellular location is the plastid membrane. It carries out the reaction ATP + H2O + 4 H(+)(in) = ADP + phosphate + 5 H(+)(out). Produces ATP from ADP in the presence of a proton gradient across the membrane. The alpha chain is a regulatory subunit. In Cuscuta obtusiflora (Peruvian dodder), this protein is ATP synthase subunit alpha, plastid.